The sequence spans 451 residues: UDP-N-acetylmuramoylalanine--D-glutamate ligase (451 aa).

Residue 119-125 participates in ATP binding; it reads GSNGKTT.

This sequence belongs to the MurCDEF family.

The protein resides in the cytoplasm. The enzyme catalyses UDP-N-acetyl-alpha-D-muramoyl-L-alanine + D-glutamate + ATP = UDP-N-acetyl-alpha-D-muramoyl-L-alanyl-D-glutamate + ADP + phosphate + H(+). It functions in the pathway cell wall biogenesis; peptidoglycan biosynthesis. Functionally, cell wall formation. Catalyzes the addition of glutamate to the nucleotide precursor UDP-N-acetylmuramoyl-L-alanine (UMA). The protein is UDP-N-acetylmuramoylalanine--D-glutamate ligase of Streptococcus agalactiae serotype III (strain NEM316).